The chain runs to 1594 residues: RB1-inducible coiled-coil protein 1 (1594 aa).

Phosphoserine is present on residues Ser-222, Ser-229, and Ser-237. A Phosphothreonine modification is found at Thr-238. Phosphoserine is present on residues Ser-243, Ser-253, Ser-257, Ser-261, and Ser-266. The short motif at 566 to 569 (KPRK) is the Nuclear localization signal element. Ser-624, Ser-647, Ser-650, Ser-652, Ser-653, Ser-734, Ser-1091, Ser-1222, Ser-1370, and Ser-1484 each carry phosphoserine. A disordered region spans residues 638-673 (EQKASVSQTSPQSASSPRMESTAGITTTTSPRTPPP). Positions 641-654 (ASVSQTSPQSASSP) are enriched in low complexity. Positions 731 to 737 (DFMSAVN) match the FFAT motif. Coiled-coil stretches lie at residues 859-1397 (LKEK…SSSF) and 1438-1485 (METS…SQSM).

The protein belongs to the ATG17 family. As to quaternary structure, part of a complex consisting of ATG13/KIAA0652, ULK1 and RB1CC1. This complex associates with ATG101. Interacts with PTK2/FAK1 and PTK2B/PYK2. Interacts with GABARAP and GABARAPL1. Interacts with ATG16L1; the interaction is required for ULK1 complex-dependent autophagy. Interacts with RNF111, SKI and SMAD7. Interacts with COP1 in the cytoplasm of proliferating cells in response to UV stimulation. Interacts with TP53. Interacts with C9orf72. Interacts with WDR45B. Interacts with ATG13; this interaction is increased in the absence of TMEM39A. Interacts with WIPI2. Interacts with TAX1BP1. Interacts (via phosphorylated FFAT motif) with MOSPD2, VAPA and VAPB. Post-translationally, phosphorylation at Ser-734 of the FFAT motif activates interaction with MOSPD2, VAPA and VAPB. Expression levels correlated closely with those of RB1 in cancer cell lines as well as in various normal human tissues. Abundantly expressed in human musculoskeletal and cultured osteosarcoma cells.

It localises to the nucleus. The protein localises to the cytoplasm. Its subcellular location is the cytosol. It is found in the preautophagosomal structure. The protein resides in the lysosome. Involved in autophagy. Regulates early events but also late events of autophagosome formation through direct interaction with Atg16L1. Required for the formation of the autophagosome-like double-membrane structure that surrounds the Salmonella-containing vacuole (SCV) during S.typhimurium infection and subsequent xenophagy. Involved in repair of DNA damage caused by ionizing radiation, which subsequently improves cell survival by decreasing apoptosis. Inhibits PTK2/FAK1 and PTK2B/PYK2 kinase activity, affecting their downstream signaling pathways. Plays a role as a modulator of TGF-beta-signaling by restricting substrate specificity of RNF111. Functions as a DNA-binding transcription factor. Is a potent regulator of the RB1 pathway through induction of RB1 expression. Plays a crucial role in muscular differentiation. Plays an indispensable role in fetal hematopoiesis and in the regulation of neuronal homeostasis. This is RB1-inducible coiled-coil protein 1 from Homo sapiens (Human).